A 756-amino-acid chain; its full sequence is Centromere protein I (756 aa).

The segment at 1 to 60 (MSPQKRVKNVQAQNRTSQGSSSFQTTLSAWKVKQDPSNSKNISKHGQNNPVGDYEHADDQ) is disordered. Composition is skewed to polar residues over residues 10–28 (VQAQNRTSQGSSSFQTTLS) and 35–50 (DPSNSKNISKHGQNNP).

This sequence belongs to the CENP-I/CTF3 family. Component of the CENPA-CAD complex, composed of CENPI, CENPK, CENPL, CENPO, CENPP, CENPQ, CENPR and CENPS. The CENPA-CAD complex interacts with the CENPA-NAC complex, at least composed of CENPA, CENPC, CENPH, CENPM, CENPN, CENPT and CENPU. Interacts with SENP6. Sumoylated. Sumoylated form can be polyubiquitinated by RNF4, leading to its degradation. Desumoylation by SENP6 prevents its degradation.

It localises to the nucleus. Its subcellular location is the chromosome. The protein resides in the centromere. In terms of biological role, component of the CENPA-CAD (nucleosome distal) complex, a complex recruited to centromeres which is involved in assembly of kinetochore proteins, mitotic progression and chromosome segregation. May be involved in incorporation of newly synthesized CENPA into centromeres via its interaction with the CENPA-NAC complex. Required for the localization of CENPF, MAD1L1 and MAD2 (MAD2L1 or MAD2L2) to kinetochores. Involved in the response of gonadal tissues to follicle-stimulating hormone. This chain is Centromere protein I (CENPI), found in Homo sapiens (Human).